Consider the following 185-residue polypeptide: Adenylyl-sulfate kinase (185 aa).

13–20 is an ATP binding site; sequence GLSGAGKT. The active-site Phosphoserine intermediate is the Ser-87.

The protein belongs to the APS kinase family.

It carries out the reaction adenosine 5'-phosphosulfate + ATP = 3'-phosphoadenylyl sulfate + ADP + H(+). The protein operates within sulfur metabolism; hydrogen sulfide biosynthesis; sulfite from sulfate: step 2/3. Its function is as follows. Catalyzes the synthesis of activated sulfate. This chain is Adenylyl-sulfate kinase, found in Halothermothrix orenii (strain H 168 / OCM 544 / DSM 9562).